A 285-amino-acid chain; its full sequence is MDIFLAILPAIFWGSIVLFNVKLGGGPYSQTLGTTFGALIFSIVVYIFMKPVLTPTVIGVGIVSGLFWALGQANQLKSIDLMGVSRTMPISTGLQLVATTLFGVIVFHEWSTTISVVLGVLALVCIIIGVILTSLQSEEEKNAEQAGNFKRGIIILLISTVGYLVYVVVIRLFNVDGWSALLPQAVGMVLGGILLTFKHHPFNKYAIRNIIPGLIWAAGNMFLFISQPRVGVATSFSLSQMGIIISTLGGILILGERKTKRQLTGIVVGIVFIIAAGIMLGIAKS.

10 helical membrane-spanning segments follow: residues phenylalanine 4–valine 21, glycine 26–phenylalanine 48, valine 52–glycine 71, valine 84–valine 106, tryptophan 110–leucine 132, isoleucine 153–valine 175, alanine 180–phenylalanine 197, isoleucine 210–glutamine 227, valine 232–leucine 254, and isoleucine 266–alanine 283.

It belongs to the GRP transporter (TC 2.A.7.5) family.

It localises to the cell membrane. In terms of biological role, involved in the uptake of glucose. This chain is Probable glucose uptake protein GlcU (glcU), found in Bacillus cereus (strain ATCC 10987 / NRS 248).